Here is a 124-residue protein sequence, read N- to C-terminus: Large ribosomal subunit protein bL12 (124 aa).

The protein belongs to the bacterial ribosomal protein bL12 family. In terms of assembly, homodimer. Part of the ribosomal stalk of the 50S ribosomal subunit. Forms a multimeric L10(L12)X complex, where L10 forms an elongated spine to which 2 to 4 L12 dimers bind in a sequential fashion. Binds GTP-bound translation factors.

Functionally, forms part of the ribosomal stalk which helps the ribosome interact with GTP-bound translation factors. Is thus essential for accurate translation. The polypeptide is Large ribosomal subunit protein bL12 (Bacteroides fragilis (strain ATCC 25285 / DSM 2151 / CCUG 4856 / JCM 11019 / LMG 10263 / NCTC 9343 / Onslow / VPI 2553 / EN-2)).